A 621-amino-acid chain; its full sequence is Archaeal Lon protease (621 aa).

Residues 1–117 lie on the Cytoplasmic side of the membrane; that stretch reads MNEEVREILG…YKEEAMKKAQ (117 aa). 54–61 is an ATP binding site; it reads GSPGTGKS. A helical transmembrane segment spans residues 118 to 136; that stretch reads ARNFLIFTLVFLVIGYTVL. The Extracellular segment spans residues 137 to 141; the sequence is TNPGN. A helical transmembrane segment spans residues 142-160; sequence LIWGIIAAVLILMMSRYFI. Residues 161-621 are Cytoplasmic-facing; the sequence is PREDRNVPKL…KFKELELAAV (461 aa). The Lon proteolytic domain maps to 423–602; sequence GYEVGRVNGL…NEVLEHVLED (180 aa). Catalysis depends on residues Ser509 and Lys552.

This sequence belongs to the peptidase S16 family. Archaeal LonB subfamily. Homohexamer. Organized in a ring with a central cavity.

It is found in the cell membrane. Functionally, ATP-dependent serine protease that mediates the selective degradation of mutant and abnormal proteins as well as certain short-lived regulatory proteins. Degrades polypeptides processively. This is Archaeal Lon protease from Archaeoglobus fulgidus (strain ATCC 49558 / DSM 4304 / JCM 9628 / NBRC 100126 / VC-16).